We begin with the raw amino-acid sequence, 187 residues long: Elongation factor P (187 aa).

Belongs to the elongation factor P family.

The protein resides in the cytoplasm. Its pathway is protein biosynthesis; polypeptide chain elongation. Involved in peptide bond synthesis. Stimulates efficient translation and peptide-bond synthesis on native or reconstituted 70S ribosomes in vitro. Probably functions indirectly by altering the affinity of the ribosome for aminoacyl-tRNA, thus increasing their reactivity as acceptors for peptidyl transferase. The chain is Elongation factor P from Mycoplasmopsis agalactiae (strain NCTC 10123 / CIP 59.7 / PG2) (Mycoplasma agalactiae).